The sequence spans 151 residues: Large ribosomal subunit protein bL9 (151 aa).

Belongs to the bacterial ribosomal protein bL9 family.

In terms of biological role, binds to the 23S rRNA. The chain is Large ribosomal subunit protein bL9 from Chlorobium luteolum (strain DSM 273 / BCRC 81028 / 2530) (Pelodictyon luteolum).